Reading from the N-terminus, the 28-residue chain is Cysteine-rich venom protein asurin-2 (28 aa).

Residues 1-15 show a composition bias toward basic and acidic residues; it reads SNKKDYRKEIVDKHN. The interval 1–28 is disordered; that stretch reads SNKKDYRKEIVDKHNALSRSVKPTASNM. The span at 17 to 28 shows a compositional bias: polar residues; the sequence is LSRSVKPTASNM.

The protein belongs to the CRISP family. Contains 8 disulfide bonds. Expressed by the venom gland.

The protein resides in the secreted. Functionally, blocks contraction of smooth muscle elicited by high potassium-induced depolarization, but does not block caffeine-stimulated contraction. May target voltage-gated calcium channels on smooth muscle. This chain is Cysteine-rich venom protein asurin-2, found in Austrelaps superbus (Lowland copperhead snake).